Here is a 263-residue protein sequence, read N- to C-terminus: MGKNITTSRKIFRYDNGELVQQEDQMATEFPLTVMVNGEEFVTLVCSPDSLEELVIGFLASEGVIRFKNEIKRFTIDESLGFAYVDLVSTKKLQLKDYTKRVIGSCCGKGRHFYFQQDVKTAKTAIDGVTITPENCLKLMRDMQKSSKLFHHTGGVHNAALCSTDKLIAVRSDIGRHNALDKLYGYCLLHQVPVRDKLIVFSGRISSEVLLKAAKIGVSAVISKSAPTELAIQMAEELNIMTIGFARNRSFNVYTHHERIQFS.

The active-site Cysteine persulfide intermediate is Cys107.

Belongs to the FdhD family.

Its subcellular location is the cytoplasm. Its function is as follows. Required for formate dehydrogenase (FDH) activity. Acts as a sulfur carrier protein that transfers sulfur from IscS to the molybdenum cofactor prior to its insertion into FDH. This Bacillus licheniformis (strain ATCC 14580 / DSM 13 / JCM 2505 / CCUG 7422 / NBRC 12200 / NCIMB 9375 / NCTC 10341 / NRRL NRS-1264 / Gibson 46) protein is Sulfur carrier protein FdhD.